The following is a 205-amino-acid chain: GTP cyclohydrolase-2 (205 aa).

49 to 53 contacts GTP; the sequence is RIHSE. Cys54, Cys65, and Cys67 together coordinate Zn(2+). Residues Gln70, 92–94, and Thr114 contribute to the GTP site; that span reads EGR. Asp126 (proton acceptor) is an active-site residue. Arg128 (nucleophile) is an active-site residue. The GTP site is built by Thr149 and Lys154.

Belongs to the GTP cyclohydrolase II family. Zn(2+) is required as a cofactor.

The catalysed reaction is GTP + 4 H2O = 2,5-diamino-6-hydroxy-4-(5-phosphoribosylamino)-pyrimidine + formate + 2 phosphate + 3 H(+). Its pathway is cofactor biosynthesis; riboflavin biosynthesis; 5-amino-6-(D-ribitylamino)uracil from GTP: step 1/4. In terms of biological role, catalyzes the conversion of GTP to 2,5-diamino-6-ribosylamino-4(3H)-pyrimidinone 5'-phosphate (DARP), formate and pyrophosphate. The chain is GTP cyclohydrolase-2 from Shewanella piezotolerans (strain WP3 / JCM 13877).